The following is a 212-amino-acid chain: Phosphatidylserine decarboxylase proenzyme (212 aa).

Ser182 acts as the Schiff-base intermediate with substrate; via pyruvic acid in catalysis. The residue at position 182 (Ser182) is a Pyruvic acid (Ser); by autocatalysis.

This sequence belongs to the phosphatidylserine decarboxylase family. PSD-A subfamily. As to quaternary structure, heterodimer of a large membrane-associated beta subunit and a small pyruvoyl-containing alpha subunit. The cofactor is pyruvate. In terms of processing, is synthesized initially as an inactive proenzyme. Formation of the active enzyme involves a self-maturation process in which the active site pyruvoyl group is generated from an internal serine residue via an autocatalytic post-translational modification. Two non-identical subunits are generated from the proenzyme in this reaction, and the pyruvate is formed at the N-terminus of the alpha chain, which is derived from the carboxyl end of the proenzyme. The post-translation cleavage follows an unusual pathway, termed non-hydrolytic serinolysis, in which the side chain hydroxyl group of the serine supplies its oxygen atom to form the C-terminus of the beta chain, while the remainder of the serine residue undergoes an oxidative deamination to produce ammonia and the pyruvoyl prosthetic group on the alpha chain.

The protein resides in the cell membrane. It carries out the reaction a 1,2-diacyl-sn-glycero-3-phospho-L-serine + H(+) = a 1,2-diacyl-sn-glycero-3-phosphoethanolamine + CO2. The protein operates within phospholipid metabolism; phosphatidylethanolamine biosynthesis; phosphatidylethanolamine from CDP-diacylglycerol: step 2/2. In terms of biological role, catalyzes the formation of phosphatidylethanolamine (PtdEtn) from phosphatidylserine (PtdSer). The polypeptide is Phosphatidylserine decarboxylase proenzyme (Chlorobium limicola (strain DSM 245 / NBRC 103803 / 6330)).